Reading from the N-terminus, the 299-residue chain is Leucine zipper transcription factor-like protein 1 (299 aa).

Positions 96 to 296 form a coiled coil; that stretch reads LKLQTDISEL…DLRKRLAQYE (201 aa). Residues 145 to 299 form an interaction with BSS9 region; sequence GTAELLNKEI…KRLAQYEPED (155 aa).

Belongs to the LZTFL1 family. As to quaternary structure, self-associates. Interacts with BBS9; the interaction mediates the association of LZTL1 with the BBsome complex and regulates BBSome ciliary trafficking.

It is found in the cytoplasm. In terms of biological role, regulates ciliary localization of the BBSome complex. Together with the BBSome complex, controls SMO ciliary trafficking and contributes to the sonic hedgehog (SHH) pathway regulation. May play a role in neurite outgrowth. May have tumor suppressor function. In Pongo abelii (Sumatran orangutan), this protein is Leucine zipper transcription factor-like protein 1 (LZTFL1).